The chain runs to 445 residues: Exodeoxyribonuclease 7 large subunit (445 aa).

It belongs to the XseA family. In terms of assembly, heterooligomer composed of large and small subunits.

The protein resides in the cytoplasm. It catalyses the reaction Exonucleolytic cleavage in either 5'- to 3'- or 3'- to 5'-direction to yield nucleoside 5'-phosphates.. In terms of biological role, bidirectionally degrades single-stranded DNA into large acid-insoluble oligonucleotides, which are then degraded further into small acid-soluble oligonucleotides. This chain is Exodeoxyribonuclease 7 large subunit, found in Shewanella oneidensis (strain ATCC 700550 / JCM 31522 / CIP 106686 / LMG 19005 / NCIMB 14063 / MR-1).